The chain runs to 360 residues: Peptide chain release factor 1 (360 aa).

At Gln-235 the chain carries N5-methylglutamine.

It belongs to the prokaryotic/mitochondrial release factor family. Post-translationally, methylated by PrmC. Methylation increases the termination efficiency of RF1.

It localises to the cytoplasm. Functionally, peptide chain release factor 1 directs the termination of translation in response to the peptide chain termination codons UAG and UAA. The protein is Peptide chain release factor 1 of Burkholderia multivorans (strain ATCC 17616 / 249).